Reading from the N-terminus, the 1613-residue chain is NAD-specific glutamate dehydrogenase (1613 aa).

K849 is an active-site residue.

Belongs to the Glu/Leu/Phe/Val dehydrogenases family.

It catalyses the reaction L-glutamate + NAD(+) + H2O = 2-oxoglutarate + NH4(+) + NADH + H(+). Its function is as follows. Involved in arginine catabolism by converting L-glutamate, into 2-oxoglutarate, which is then channeled into the tricarboxylic acid cycle. The chain is NAD-specific glutamate dehydrogenase from Halomonas elongata (strain ATCC 33173 / DSM 2581 / NBRC 15536 / NCIMB 2198 / 1H9).